A 410-amino-acid chain; its full sequence is MLKGEKVVLAYSGGLDTSVIIPWLKENYECEIIAVCVDVGQREDLRYIKDKALASGASKVYIEDVKEEFVKDYIFPTLKAGAIYEGKYLLGTSMARPLIAKKLVEIAHKEGAKAIAHGATGKGNDQVRFEVSIRALDPSIKIIAPWRIWELKSREDEIEYAKKKGIPIPVTKEKIYSVDSNLWHVSHEGGDLEDPWNEPKSDIYDIVTPPEKVSDKPEYVYIEFEKGIPVKVNGKTLSPVKLIEELNEIGGRNGVGIVDLVENRLVGMKSRGVYETPAGTLLYIAHRELEYLVLDKETMRFKELVAQKYADLVYNGLWFSPLKTALDAFIDETQKNVTGVVRLKLYKGNVINAGAKSPYSLYNEEFATFGKDEVYNQKDAEGFINLFGLSLKIRALMEMGRKDMDEAVGR.

Ala-10–Ser-18 serves as a coordination point for ATP. Tyr-88 and Ser-93 together coordinate L-citrulline. Position 118 (Gly-118) interacts with ATP. Thr-120, Asn-124, and Asp-125 together coordinate L-aspartate. Asn-124 contacts L-citrulline. Residues Arg-128, Ser-177, Ser-186, Glu-262, and Tyr-274 each contribute to the L-citrulline site.

It belongs to the argininosuccinate synthase family. Type 1 subfamily. As to quaternary structure, homotetramer.

It localises to the cytoplasm. It carries out the reaction L-citrulline + L-aspartate + ATP = 2-(N(omega)-L-arginino)succinate + AMP + diphosphate + H(+). Its pathway is amino-acid biosynthesis; L-arginine biosynthesis; L-arginine from L-ornithine and carbamoyl phosphate: step 2/3. This is Argininosuccinate synthase from Caldanaerobacter subterraneus subsp. tengcongensis (strain DSM 15242 / JCM 11007 / NBRC 100824 / MB4) (Thermoanaerobacter tengcongensis).